A 654-amino-acid chain; its full sequence is Meiotically up-regulated gene 24 protein (654 aa).

The region spanning 299-355 (RNVFIGNLPSSYHEKEIEEAFGKFGKIEHIKILSKKNIAFVHFLNIRDAIKVVRTLS) is the RRM 1 domain. The segment at 383-404 (SCFTSKQNPDTTSDRCRQQESK) is disordered. Over residues 384–393 (CFTSKQNPDT) the composition is skewed to polar residues. Residues 394–404 (TSDRCRQQESK) show a composition bias toward basic and acidic residues. RRM domains follow at residues 409 to 482 (RTVF…WGKE) and 500 to 571 (RNVY…YAPD).

The protein resides in the cytoplasm. Functionally, has a role in meiosis. This is Meiotically up-regulated gene 24 protein (mug24) from Schizosaccharomyces pombe (strain 972 / ATCC 24843) (Fission yeast).